The chain runs to 1062 residues: Carbamoyl phosphate synthase large chain (1062 aa).

The segment at 1 to 401 (MPKRTDIHKI…AMQKAVRSLE (401 aa)) is carboxyphosphate synthetic domain. ATP-binding residues include Arg-129, Arg-169, Gly-175, Gly-176, Lys-208, Ile-210, Glu-215, Gly-241, Ile-242, His-243, Gln-284, and Glu-298. The 195-residue stretch at 133-327 (KELCKELGEP…IAKMAAKIAI (195 aa)) folds into the ATP-grasp 1 domain. Positions 284, 298, and 300 each coordinate Mg(2+). Residues Gln-284, Glu-298, and Asn-300 each coordinate Mn(2+). The segment at 402–546 (IDEKDLYSET…YSTYDGENES (145 aa)) is oligomerization domain. Residues 547–929 (HKSGKKSVIV…ALYKAFAGAK (383 aa)) form a carbamoyl phosphate synthetic domain region. One can recognise an ATP-grasp 2 domain in the interval 671–861 (DQIIKKLKLN…MAQVATRVIM (191 aa)). ATP-binding residues include Arg-707, Asp-746, Leu-748, Glu-752, Gly-777, Val-778, His-779, Ser-780, Gln-820, and Glu-832. Positions 820, 832, and 834 each coordinate Mg(2+). Residues Gln-820, Glu-832, and Asn-834 each coordinate Mn(2+). In terms of domain architecture, MGS-like spans 930 to 1062 (MQLPENGNVL…NRSFATDALK (133 aa)). The allosteric domain stretch occupies residues 930 to 1062 (MQLPENGNVL…NRSFATDALK (133 aa)).

This sequence belongs to the CarB family. As to quaternary structure, composed of two chains; the small (or glutamine) chain promotes the hydrolysis of glutamine to ammonia, which is used by the large (or ammonia) chain to synthesize carbamoyl phosphate. Tetramer of heterodimers (alpha,beta)4. It depends on Mg(2+) as a cofactor. Mn(2+) is required as a cofactor.

The enzyme catalyses hydrogencarbonate + L-glutamine + 2 ATP + H2O = carbamoyl phosphate + L-glutamate + 2 ADP + phosphate + 2 H(+). The catalysed reaction is hydrogencarbonate + NH4(+) + 2 ATP = carbamoyl phosphate + 2 ADP + phosphate + 2 H(+). The protein operates within amino-acid biosynthesis; L-arginine biosynthesis; carbamoyl phosphate from bicarbonate: step 1/1. Its pathway is pyrimidine metabolism; UMP biosynthesis via de novo pathway; (S)-dihydroorotate from bicarbonate: step 1/3. Functionally, large subunit of the glutamine-dependent carbamoyl phosphate synthetase (CPSase). CPSase catalyzes the formation of carbamoyl phosphate from the ammonia moiety of glutamine, carbonate, and phosphate donated by ATP, constituting the first step of 2 biosynthetic pathways, one leading to arginine and/or urea and the other to pyrimidine nucleotides. The large subunit (synthetase) binds the substrates ammonia (free or transferred from glutamine from the small subunit), hydrogencarbonate and ATP and carries out an ATP-coupled ligase reaction, activating hydrogencarbonate by forming carboxy phosphate which reacts with ammonia to form carbamoyl phosphate. This is Carbamoyl phosphate synthase large chain from Lactobacillus johnsonii (strain CNCM I-12250 / La1 / NCC 533).